We begin with the raw amino-acid sequence, 315 residues long: tRNA dimethylallyltransferase (315 aa).

Residue 14–21 (GATATGKS) participates in ATP binding. Substrate is bound at residue 16–21 (TATGKS). The interaction with substrate tRNA stretch occupies residues 39–42 (DSRQ).

This sequence belongs to the IPP transferase family. In terms of assembly, monomer. Requires Mg(2+) as cofactor.

The catalysed reaction is adenosine(37) in tRNA + dimethylallyl diphosphate = N(6)-dimethylallyladenosine(37) in tRNA + diphosphate. Its function is as follows. Catalyzes the transfer of a dimethylallyl group onto the adenine at position 37 in tRNAs that read codons beginning with uridine, leading to the formation of N6-(dimethylallyl)adenosine (i(6)A). In Microcystis aeruginosa (strain NIES-843 / IAM M-2473), this protein is tRNA dimethylallyltransferase.